The sequence spans 787 residues: Dolichyl-diphosphooligosaccharide--protein glycosyltransferase subunit STT3A (787 aa).

Topologically, residues 1-18 are cytoplasmic; that stretch reads MAEPESSTAAAGGSRLRN. A helical transmembrane segment spans residues 19–39; sequence ACGGVLCAFTLLLIGVLAFSI. Residues 40–125 lie on the Lumenal side of the membrane; the sequence is RLFSVIKYES…LSVETVCVFT (86 aa). The short motif at 53 to 55 is the DXD motif 1 element; that stretch reads EFD. D55 contacts Mn(2+). The chain crosses the membrane as a helical span at residues 126-144; that stretch reads APIFSANASWATYLLTKEA. The Cytoplasmic portion of the chain corresponds to 145-146; it reads KG. A helical transmembrane segment spans residues 147 to 164; that stretch reads TGAGLMAAAILAMVPSYI. The Lumenal segment spans residues 165 to 175; sequence SRSVAGSYDNE. Residues D173 and E175 each contribute to the Mn(2+) site. A DXD motif 2 motif is present at residues 173–175; it reads DNE. A helical transmembrane segment spans residues 176–195; the sequence is AVAIFALIFTFYLYVKTLNT. Residues 196–197 are Cytoplasmic-facing; sequence GS. Residues 198–212 form a helical membrane-spanning segment; it reads LFYATLNALSYFYMV. Topologically, residues 213-217 are lumenal; sequence CSWGG. Residues 218-234 form a helical membrane-spanning segment; sequence YTFIINLIPIHVLLCIV. The Cytoplasmic segment spans residues 235 to 239; it reads TGRYS. Residues 240–265 form a helical membrane-spanning segment; the sequence is SRLYIAYAPLVILGTLLAALVPVVGF. The Lumenal portion of the chain corresponds to 266-273; the sequence is NAVMTSEH. Residues 274-293 traverse the membrane as a helical segment; sequence FASFLVFIILHVVALVYYIK. At 294-306 the chain is on the cytoplasmic side; that stretch reads GLLTPRLFKVAMT. The chain crosses the membrane as a helical span at residues 307 to 327; sequence LVITVGLAVCFAVIAILIALV. Topologically, residues 328 to 365 are lumenal; it reads ASSPTKGWSGRSLSLLDPTYASKYIPIIASVSEHQPPT. The SVSE motif motif lies at 357–360; sequence SVSE. A helical transmembrane segment spans residues 366-388; sequence WPSYFMDINVLAFLIPAGIISCF. The Cytoplasmic segment spans residues 389–394; it reads LPLSDA. The helical transmembrane segment at 395 to 411 threads the bilayer; it reads SSFVVLYLVTAVYFSGV. Residues 412–415 lie on the Lumenal side of the membrane; that stretch reads MVRL. Dolichyl diphosphooligosaccharide is bound at residue R414. Residues 416-437 form a helical membrane-spanning segment; that stretch reads MLVLAPAACILSGIALSEAFDV. The Cytoplasmic portion of the chain corresponds to 438 to 525; that stretch reads LTRSVKYQLS…KLLVLPMEAS (88 aa). Over residues 453–475 the composition is skewed to low complexity; it reads SPAASGDSSAESSSASTVSTNSA. Residues 453 to 507 form a disordered region; it reads SPAASGDSSAESSSASTVSTNSAKNETRPEKTETAPKEKPSKKNRKKEKEVAESV. The segment covering 477–504 has biased composition (basic and acidic residues); that stretch reads NETRPEKTETAPKEKPSKKNRKKEKEVA. The helical transmembrane segment at 526-546 threads the bilayer; the sequence is VLGILLLIVLGGFYVVHCVWA. The Lumenal segment spans residues 547-787; it reads AAEAYSAPSI…AAGRKKNPWQ (241 aa). The interval 592-594 is interacts with target acceptor peptide in protein substrate; it reads WWD. Positions 592 to 596 match the WWDYG motif motif; it reads WWDYG. Y597 lines the dolichyl diphosphooligosaccharide pocket. N-linked (GlcNAc...) asparagine glycosylation is found at N604 and N611. N-linked (GlcNAc...) (high mannose) asparagine glycosylation is present at N615. The DK motif signature appears at 659–666; the sequence is DINKFLWM. The span at 759-769 shows a compositional bias: basic residues; that stretch reads RVRGKLKKLKS. The segment at 759–787 is disordered; sequence RVRGKLKKLKSGSKASSTNAAGRKKNPWQ.

Belongs to the STT3 family. As to quaternary structure, component of the oligosaccharyltransferase (OST) complex. Requires Mg(2+) as cofactor. Mn(2+) is required as a cofactor.

It is found in the endoplasmic reticulum membrane. The enzyme catalyses a di-trans,poly-cis-dolichyl diphosphooligosaccharide + L-asparaginyl-[protein] = N(4)-(oligosaccharide-(1-&gt;4)-N-acetyl-beta-D-glucosaminyl-(1-&gt;4)-N-acetyl-beta-D-glucosaminyl)-L-asparaginyl-[protein] + a di-trans,poly-cis-dolichyl diphosphate + H(+). The protein operates within protein modification; protein glycosylation. Its function is as follows. Catalytic subunit of the oligosaccharyl transferase (OST) complex that catalyzes the initial transfer of a defined glycan (Glc(3)Man(9)GlcNAc(2) in eukaryotes) from the lipid carrier dolichol-pyrophosphate to an asparagine residue within an Asn-X-Ser/Thr consensus motif in nascent polypeptide chains, the first step in protein N-glycosylation. N-glycosylation occurs cotranslationally and the complex associates with the Sec61 complex at the channel-forming translocon complex that mediates protein translocation across the endoplasmic reticulum (ER). All subunits are required for a maximal enzyme activity. This subunit contains the active site and the acceptor peptide and donor lipid-linked oligosaccharide (LLO) binding pockets. The protein is Dolichyl-diphosphooligosaccharide--protein glycosyltransferase subunit STT3A (STT3A) of Oryza sativa subsp. japonica (Rice).